Here is a 254-residue protein sequence, read N- to C-terminus: DNA repair protein RecO (254 aa).

This sequence belongs to the RecO family.

Involved in DNA repair and RecF pathway recombination. In Anaeromyxobacter dehalogenans (strain 2CP-1 / ATCC BAA-258), this protein is DNA repair protein RecO.